Reading from the N-terminus, the 754-residue chain is MEARERGSMSSSIGNSAELEGNLTLSDRLKVFKGSTFDPDAYVTSKCQRMNEKETRHLSSYLVELKKASAEEMRKSVYANYAAFIRTSKEISALEGQLLSMRNLLSAQAALVHGLADGVHISSLCADDADDLRDEDLYDMDNKQLSNIENWVVEFFDRLEVLLAEKRVEESMAALEEGRRVAVEAHEKRTLSPTTLLSLNNAIKEKRQELADQLAEAISQPSTRGGELRSAVLSLKKLGDGSRAHTLLLRSYERRLQANIQSLRASNTSYGVAFAAALSQLVFSTIAQAASDSQAVVGEDPAYTSELVTWAVKQAESFALLLKRHTLASSAAAGSLRVTAECVQLCASHCSSLESRGLALSPVLLKHFRPGVEQALTGNLKRIEQSSAALAASDDWSLSYTPTGSRASSTTPTAPHLKLSISAQRFNSMVQEFLEDAGPLDEALQLDGIALDGVLQVFNSYVDLLINALPGSAENEENPVHRIVKVAETESQQTALLVNALLLADELIPRSASRILPQGTSQSTPRRGSSDRQNRPEQREWKKKLQRSVDRLRDSFCRQHALELIFTEEGEVRLSSEIYILMDETTEEPEWFPSPIFQELFAKLTRIAMIVSDMFVGRERFATILLMRLTETVILWISDDQSFWEEMETGDKPLGPLGLQQFYLDMEFVMIFASQGRYLSRNLHQVIKNIIARAVEAVSATGLDPYSTLPEEEWFAEVAQIAIKMLMGKGNFGGHGERDVTSPSVSSAKSYTSN.

Disordered regions lie at residues arginine 514–glutamate 540 and glycine 734–asparagine 754. The segment covering glutamine 518–arginine 527 has biased composition (polar residues). Positions glycine 528–glutamate 540 are enriched in basic and acidic residues. Polar residues predominate over residues threonine 741 to asparagine 754.

It belongs to the EXO84 family. The exocyst complex is composed of SEC3, SEC5, SEC6, SEC8, SEC10, EXO70A1 and EXO84.

In terms of biological role, component of the exocyst complex involved in the docking of exocytic vesicles with fusion sites on the plasma membrane during regulated or polarized secretion. Involved in polarized cell growth and organ morphogenesis. During cytokinesis, involved in cell plate initiation, cell plate maturation and formation of new primary cell wall. This is Exocyst complex component EXO84A (EXO84A) from Arabidopsis thaliana (Mouse-ear cress).